The following is a 106-amino-acid chain: Thioredoxin-2 (106 aa).

The region spanning 2–106 (VYQIKDKADL…RLEDVIKANI (105 aa)) is the Thioredoxin domain. Residues cysteine 32 and cysteine 35 each act as nucleophile in the active site. Cysteine 32 and cysteine 35 are disulfide-bonded.

It belongs to the thioredoxin family.

Participates in various redox reactions through the reversible oxidation of its active center dithiol to a disulfide and catalyzes dithiol-disulfide exchange reactions. As a reducing substrate of peroxiredoxin 1, thioredoxin 2 is preferred over thioredoxin 1. This Drosophila yakuba (Fruit fly) protein is Thioredoxin-2.